Consider the following 424-residue polypeptide: Anaerobic glycerol-3-phosphate dehydrogenase subunit B (424 aa).

The protein belongs to the anaerobic G-3-P dehydrogenase subunit B family. In terms of assembly, composed of a catalytic GlpA/B dimer and of membrane bound GlpC. FMN is required as a cofactor.

The catalysed reaction is a quinone + sn-glycerol 3-phosphate = dihydroxyacetone phosphate + a quinol. It participates in polyol metabolism; glycerol degradation via glycerol kinase pathway; glycerone phosphate from sn-glycerol 3-phosphate (anaerobic route): step 1/1. In terms of biological role, conversion of glycerol 3-phosphate to dihydroxyacetone. Uses fumarate or nitrate as electron acceptor. The sequence is that of Anaerobic glycerol-3-phosphate dehydrogenase subunit B from Yersinia enterocolitica serotype O:8 / biotype 1B (strain NCTC 13174 / 8081).